The sequence spans 318 residues: Probable casein kinase I homolog ECU11_1980 (318 aa).

Residues 8 to 276 (YTICREIGKG…YLNSLLDKIF (269 aa)) form the Protein kinase domain. ATP-binding positions include 14-22 (IGKGGFGKV) and K37. Catalysis depends on D129, which acts as the Proton acceptor.

It belongs to the protein kinase superfamily. CK1 Ser/Thr protein kinase family. Casein kinase I subfamily.

The protein localises to the nucleus. The catalysed reaction is L-seryl-[protein] + ATP = O-phospho-L-seryl-[protein] + ADP + H(+). It carries out the reaction L-threonyl-[protein] + ATP = O-phospho-L-threonyl-[protein] + ADP + H(+). Functionally, involved in DNA repair. May regulate the activity of protein(s) involved in double strand break repair caused by gamma rays. The protein is Probable casein kinase I homolog ECU11_1980 of Encephalitozoon cuniculi (strain GB-M1) (Microsporidian parasite).